Consider the following 358-residue polypeptide: Gap junction alpha-5 protein (358 aa).

Over 1-19 (MGDWSFLGEFLEEVHKHST) the chain is Cytoplasmic. A helical membrane pass occupies residues 20–40 (VIGKVWLTVLFIFRMLVLGTA). The Extracellular portion of the chain corresponds to 41–76 (AESSWGDEQADFQCDTMQPGCGNVCYDQAFPISHIR). Residues 77 to 97 (YWVLQIIFVSTPSLVYMGHAM) traverse the membrane as a helical segment. Topologically, residues 98–164 (HTVRMQEKRK…CSILIRTTME (67 aa)) are cytoplasmic. A helical membrane pass occupies residues 165–185 (VAFIVGQYLLYGIFLDTLHVC). At 186 to 205 (RRSPCPHPVNCYVSRPTEKN) the chain is on the extracellular side. Residues 206–226 (VFIVFMLAVAALSLFLSLAEL) traverse the membrane as a helical segment. The Cytoplasmic portion of the chain corresponds to 227 to 358 (YHLGWKKLRQ…SKARSDDLSV (132 aa)). A disordered region spans residues 318 to 358 (AQKPEVPNGASPGHRLPHGYQSDKRRLSKASSKARSDDLSV). Phosphoserine occurs at positions 353 and 357.

This sequence belongs to the connexin family. Alpha-type (group II) subfamily. A connexon is composed of a hexamer of connexins.

The protein resides in the cell membrane. The protein localises to the cell junction. It is found in the gap junction. One gap junction consists of a cluster of closely packed pairs of transmembrane channels, the connexons, through which materials of low MW diffuse from one cell to a neighboring cell. The sequence is that of Gap junction alpha-5 protein (GJA5) from Canis lupus familiaris (Dog).